A 762-amino-acid polypeptide reads, in one-letter code: cGMP-dependent protein kinase 2 (762 aa).

The tract at residues 1–25 (MGNGSVKPKHSKHPDGHSGNLTTDA) is disordered. Glycine 2 carries the N-myristoyl glycine lipid modification. The stretch at 23–85 (TDALRNKVTE…CIQLNKLQDV (63 aa)) forms a coiled coil. 2 positions are modified to phosphoserine: serine 110 and serine 117. The disordered stretch occupies residues 117–138 (SRRGAKAGVSAEPTTRTYDLNK). Residues 168-283 (FLKRLDPQQI…DEQYRNFLRS (116 aa)) are cGMP-binding, high affinity; cAMP-binding, moderate affinity. 3',5'-cyclic AMP contacts are provided by residues 232-235 (GELA) and 242-243 (RT). 3',5'-cyclic GMP-binding positions include 232–235 (GELA), 242–243 (RT), lysine 347, 356–359 (GEKA), 366–367 (RS), aspartate 412, and arginine 415. The interval 286 to 416 (LLKNLPEDKL…NLNRDDEKRH (131 aa)) is cGMP-binding, high affinity; cAMP-binding, low affinity. Position 431 is a phosphoserine (serine 431). In terms of domain architecture, Protein kinase spans 453-711 (LEIIATLGVG…INDIKKHRWL (259 aa)). Residues 459 to 467 (LGVGGFGRV) and lysine 482 contribute to the ATP site. Aspartate 576 acts as the Proton acceptor in catalysis. Phosphothreonine is present on threonine 609. One can recognise an AGC-kinase C-terminal domain in the interval 712–762 (NGFNWEGLKARSLPSPLQRELKGPIDHSYFDKYPPEKGMPPDELSGWDKDF). Residues 740-762 (YFDKYPPEKGMPPDELSGWDKDF) form a disordered region.

The protein belongs to the protein kinase superfamily. AGC Ser/Thr protein kinase family. cGMP subfamily. In terms of assembly, interacts with GRIA1/GLUR1. In terms of processing, myristoylation mediates membrane localization. In terms of tissue distribution, highly concentrated in brain, lung and intestinal mucosa.

Its subcellular location is the apical cell membrane. The enzyme catalyses L-seryl-[protein] + ATP = O-phospho-L-seryl-[protein] + ADP + H(+). It carries out the reaction L-threonyl-[protein] + ATP = O-phospho-L-threonyl-[protein] + ADP + H(+). Its activity is regulated as follows. Binding of cGMP results in enzyme activation. In terms of biological role, crucial regulator of intestinal secretion and bone growth. Phosphorylates and activates CFTR on the plasma membrane. Plays a key role in intestinal secretion by regulating cGMP-dependent translocation of CFTR in jejunum. Acts downstream of NMDAR to activate the plasma membrane accumulation of GRIA1/GLUR1 in synapse and increase synaptic plasticity. Phosphorylates GRIA1/GLUR1 at Ser-863. Acts as a regulator of gene expression and activator of the extracellular signal-regulated kinases MAPK3/ERK1 and MAPK1/ERK2 in mechanically stimulated osteoblasts. Under fluid shear stress, mediates ERK activation and subsequent induction of FOS, FOSL1/FRA1, FOSL2/FRA2 and FOSB that play a key role in the osteoblast anabolic response to mechanical stimulation. The protein is cGMP-dependent protein kinase 2 (PRKG2) of Homo sapiens (Human).